The sequence spans 203 residues: Urease accessory protein UreG (203 aa).

Gly-14–Thr-21 is a binding site for GTP.

It belongs to the SIMIBI class G3E GTPase family. UreG subfamily. In terms of assembly, homodimer. UreD, UreF and UreG form a complex that acts as a GTP-hydrolysis-dependent molecular chaperone, activating the urease apoprotein by helping to assemble the nickel containing metallocenter of UreC. The UreE protein probably delivers the nickel.

The protein localises to the cytoplasm. Functionally, facilitates the functional incorporation of the urease nickel metallocenter. This process requires GTP hydrolysis, probably effectuated by UreG. This is Urease accessory protein UreG from Rhizobium rhizogenes (strain K84 / ATCC BAA-868) (Agrobacterium radiobacter).